Here is a 296-residue protein sequence, read N- to C-terminus: Cytidine deaminase (296 aa).

CMP/dCMP-type deaminase domains are found at residues 47–167 and 186–296; these read TESE…FGPK and DSSD…VDPI. Residue 88-90 participates in substrate binding; it reads NLE. Histidine 101 is a Zn(2+) binding site. Catalysis depends on glutamate 103, which acts as the Proton donor. The Zn(2+) site is built by cysteine 128 and cysteine 131.

Belongs to the cytidine and deoxycytidylate deaminase family. Homodimer. The cofactor is Zn(2+).

The catalysed reaction is cytidine + H2O + H(+) = uridine + NH4(+). It carries out the reaction 2'-deoxycytidine + H2O + H(+) = 2'-deoxyuridine + NH4(+). This enzyme scavenges exogenous and endogenous cytidine and 2'-deoxycytidine for UMP synthesis. This chain is Cytidine deaminase, found in Shewanella oneidensis (strain ATCC 700550 / JCM 31522 / CIP 106686 / LMG 19005 / NCIMB 14063 / MR-1).